The primary structure comprises 383 residues: Insulinoma-associated protein 1a (383 aa).

The tract at residues 1 to 20 (MPRGFLVKRNKKATPVSYRV) is SNAG domain. Disordered stretches follow at residues 99-141 (PVDL…AMRK) and 229-269 (RWHK…SEDG). A compositionally biased stretch (polar residues) spans 105 to 120 (GTSNSNRTGTTVTTKR). The span at 130 to 140 (KPASKKAKAMR) shows a compositional bias: basic residues. The C2H2-type 1 zinc-finger motif lies at 209-231 (YRCPECDKLFSCPANLASHRRWH). The span at 244–256 (APEKEETSSDRDT) shows a compositional bias: basic and acidic residues. Residues 271–295 (YDCQHCGKKFKRQAYLKKHVTAHHD) form a C2H2-type 2; degenerate zinc finger. 2 consecutive C2H2-type zinc fingers follow at residues 314-337 (HLCPVCGENFPSRMSQERHIRLQH) and 342-365 (YPCKYCPAMFYSSPGLTRHINKCH).

The protein belongs to the INSM1 family.

It is found in the nucleus. Its function is as follows. May act as a transcriptional regulator. May play a role in neurogenesis and neuroendocrine cell differentiation during embryonic development. This chain is Insulinoma-associated protein 1a (insm1a), found in Danio rerio (Zebrafish).